The following is a 185-amino-acid chain: Ribonuclease HII (185 aa).

The RNase H type-2 domain maps to 1–185 (MKICGIDEAG…LKHLQGILEF (185 aa)). A divalent metal cation-binding residues include Asp7, Glu8, and Asp96.

It belongs to the RNase HII family. Mn(2+) is required as a cofactor. It depends on Mg(2+) as a cofactor.

The protein resides in the cytoplasm. The enzyme catalyses Endonucleolytic cleavage to 5'-phosphomonoester.. Functionally, endonuclease that specifically degrades the RNA of RNA-DNA hybrids. This chain is Ribonuclease HII, found in Campylobacter hominis (strain ATCC BAA-381 / DSM 21671 / CCUG 45161 / LMG 19568 / NCTC 13146 / CH001A).